A 261-amino-acid polypeptide reads, in one-letter code: Histone H3-like centromeric protein cpar-1 (261 aa).

Residues 80–150 (TVGSNSTNLV…AGSSSSDRVR (71 aa)) form a disordered region. Polar residues predominate over residues 113–127 (AANSHHQSPINVGNR). Over residues 132–146 (GTNGRNGSRAGSSSS) the composition is skewed to low complexity. The interval 164-261 (YRPGQKALEE…LYRRLCLPNL (98 aa)) is H3-like.

It belongs to the histone H3 family. Forms a nucleosome-like histone octamer containing two molecules each of H2A, H2B, cpar-1 and H4 assembled in one cpar-1-H4 heterotetramer and two H2A-H2B heterodimers. In terms of processing, cleaved at the onset of meiotic anaphase I, likely by separase sep-1.

It localises to the nucleus. It is found in the chromosome. Functionally, histone H3-like variant which exclusively replaces conventional H3 in the nucleosome core of centromeric chromatin at the inner plate of the kinetochore. Required for recruitment and assembly of kinetochore proteins, mitotic progression and chromosome segregation. May serve as an epigenetic mark that propagates centromere identity through replication and cell division. Not required for chromosome segregation during meiosis. This chain is Histone H3-like centromeric protein cpar-1, found in Caenorhabditis elegans.